The sequence spans 325 residues: Protease HtpX homolog (325 aa).

The chain crosses the membrane as a helical span at residues 20 to 40; that stretch reads IGYLLGGGGGMMIALVIAVAM. H130 is a binding site for Zn(2+). E131 is a catalytic residue. H134 is a binding site for Zn(2+). The next 2 membrane-spanning stretches (helical) occupy residues 145 to 165 and 173 to 193; these read IVAT…FLGG and VMGV…AMIV. Residue E202 participates in Zn(2+) binding. The disordered stretch occupies residues 286–325; the sequence is SAAMTARAAAPSQNSGPWGQRSDNAGGNSNGGSRYRGPWS. Over residues 306–325 the composition is skewed to low complexity; sequence RSDNAGGNSNGGSRYRGPWS.

It belongs to the peptidase M48B family. Requires Zn(2+) as cofactor.

It is found in the cell inner membrane. This is Protease HtpX homolog from Brucella melitensis biotype 2 (strain ATCC 23457).